The sequence spans 2289 residues: DNA polymerase II large subunit (2289 aa).

2 disordered regions span residues 279–330 (IGSD…SPRA) and 544–563 (SDTN…NTDD). Residues 292 to 304 (GEADIVKTDKDTN) show a composition bias toward basic and acidic residues. Positions 305-318 (ESETEDGIDNDDYN) are enriched in acidic residues. The segment covering 544–557 (SDTNSASGNTSLRA) has biased composition (polar residues). DOD-type homing endonuclease domains follow at residues 1222-1367 (LLGY…RLGI) and 1755-1911 (LLGQ…RLGV).

The protein belongs to the archaeal DNA polymerase II family. Heterodimer of a large subunit and a small subunit. Post-translationally, this protein undergoes a protein self splicing that involves a post-translational excision of the intervening region (intein) followed by peptide ligation.

The catalysed reaction is DNA(n) + a 2'-deoxyribonucleoside 5'-triphosphate = DNA(n+1) + diphosphate. The enzyme catalyses Exonucleolytic cleavage in the 3'- to 5'-direction to yield nucleoside 5'-phosphates.. Its function is as follows. Possesses two activities: a DNA synthesis (polymerase) and an exonucleolytic activity that degrades single-stranded DNA in the 3'- to 5'-direction. Has a template-primer preference which is characteristic of a replicative DNA polymerase. The polypeptide is DNA polymerase II large subunit (Haloquadratum walsbyi (strain DSM 16790 / HBSQ001)).